Reading from the N-terminus, the 330-residue chain is Malate dehydrogenase (330 aa).

NAD(+) is bound at residue 12–18; that stretch reads GAAGQIG. 2 residues coordinate substrate: Arg93 and Arg99. Residues Asn106, Gln113, and 130 to 132 contribute to the NAD(+) site; that span reads VGN. Substrate is bound by residues Asn132 and Arg163. Residue His188 is the Proton acceptor of the active site.

This sequence belongs to the LDH/MDH superfamily. MDH type 2 family.

It carries out the reaction (S)-malate + NAD(+) = oxaloacetate + NADH + H(+). Functionally, catalyzes the reversible oxidation of malate to oxaloacetate. In Legionella pneumophila subsp. pneumophila (strain Philadelphia 1 / ATCC 33152 / DSM 7513), this protein is Malate dehydrogenase.